A 322-amino-acid polypeptide reads, in one-letter code: Ribonuclease Z (322 aa).

Zn(2+)-binding residues include His-62, His-64, Asp-66, His-67, His-139, Asp-210, and His-268. Asp-66 (proton acceptor) is an active-site residue.

It belongs to the RNase Z family. In terms of assembly, homodimer. Zn(2+) is required as a cofactor.

The catalysed reaction is Endonucleolytic cleavage of RNA, removing extra 3' nucleotides from tRNA precursor, generating 3' termini of tRNAs. A 3'-hydroxy group is left at the tRNA terminus and a 5'-phosphoryl group is left at the trailer molecule.. Functionally, zinc phosphodiesterase, which displays some tRNA 3'-processing endonuclease activity. Probably involved in tRNA maturation, by removing a 3'-trailer from precursor tRNA. The protein is Ribonuclease Z of Nostoc sp. (strain PCC 7120 / SAG 25.82 / UTEX 2576).